Reading from the N-terminus, the 45-residue chain is Large ribosomal subunit protein bL34 (45 aa).

Over residues methionine 1–asparagine 10 the composition is skewed to polar residues. The tract at residues methionine 1 to valine 45 is disordered. A compositionally biased stretch (basic residues) spans arginine 11–valine 45.

Belongs to the bacterial ribosomal protein bL34 family.

This chain is Large ribosomal subunit protein bL34 (rpmH), found in Synechocystis sp. (strain ATCC 27184 / PCC 6803 / Kazusa).